The primary structure comprises 401 residues: Hemorrhagic metalloproteinase-disintegrin-like kaouthiagin (401 aa).

Residues 14–208 (KYIEFYVIVD…DRPQCILNKP (195 aa)) enclose the Peptidase M12B domain. Residues E17 and D101 each contribute to the Ca(2+) site. N-linked (GlcNAc...) asparagine glycosylation occurs at N112. 3 cysteine pairs are disulfide-bonded: C125-C203, C164-C187, and C166-C171. H149 contacts Zn(2+). Residue E150 is part of the active site. Residues H153 and H159 each contribute to the Zn(2+) site. Residues C203, N206, I218, N221, F223, E225, E228, and D231 each contribute to the Ca(2+) site. One can recognise a Disintegrin domain in the interval 216 to 285 (PAICGNYFVE…ECPTDSLQRN (70 aa)). 11 disulfides stabilise this stretch: C219/C248, C230/C243, C232/C238, C257/C277, C264/C296, C289/C301, C308/C358, C323/C366, C336/C346, C353/C389, and C383/C394. The D/ECD-tripeptide signature appears at 263-265 (DCD). Ca(2+) is bound by residues D265, L266, E268, and D280.

This sequence belongs to the venom metalloproteinase (M12B) family. P-III subfamily. P-IIIa sub-subfamily. As to quaternary structure, monomer. The cofactor is Zn(2+). Expressed by the venom gland.

It is found in the secreted. Its function is as follows. Snake venom zinc protease that inhibits hemostasis by binding and cleaving the vWF in humans. Also has and inhibitory effect on the collagen-induced platelet aggregation. This is Hemorrhagic metalloproteinase-disintegrin-like kaouthiagin from Naja kaouthia (Monocled cobra).